The sequence spans 165 residues: Phosphopantetheine adenylyltransferase (165 aa).

Position 10 (T10) interacts with substrate. Residues T10–F11 and H18 each bind ATP. Substrate contacts are provided by K42, L75, and R89. ATP-binding positions include G90–R92, E100, and Y125–T131.

Belongs to the bacterial CoaD family. Homohexamer. Mg(2+) serves as cofactor.

It localises to the cytoplasm. The enzyme catalyses (R)-4'-phosphopantetheine + ATP + H(+) = 3'-dephospho-CoA + diphosphate. It functions in the pathway cofactor biosynthesis; coenzyme A biosynthesis; CoA from (R)-pantothenate: step 4/5. Reversibly transfers an adenylyl group from ATP to 4'-phosphopantetheine, yielding dephospho-CoA (dPCoA) and pyrophosphate. The polypeptide is Phosphopantetheine adenylyltransferase (Chlorobaculum tepidum (strain ATCC 49652 / DSM 12025 / NBRC 103806 / TLS) (Chlorobium tepidum)).